A 747-amino-acid chain; its full sequence is Anoctamin-9 (747 aa).

Topologically, residues 1–193 (MQDDESSQIF…LYFTWLGWYT (193 aa)) are cytoplasmic. The chain crosses the membrane as a helical span at residues 194–214 (YMLVPAAVVGLIVFLSGFALF). Topologically, residues 215-259 (DSSQISKEICSANDIFMCPLGDHSHRYLRLSEMCTFAKLTHLFDN) are extracellular. Ser-245 bears the Phosphoserine; by PKA mark. The chain crosses the membrane as a helical span at residues 260–280 (EGTVLFAIFMALWATVFLEIW). The Cytoplasmic portion of the chain corresponds to 281–326 (KRKRAHEVQSWKLYEWDEEEEEMALELINSPHYKLKDHRHSYLSST). Residues 327 to 347 (IILILSLFMICLMIGMAHVLV) traverse the membrane as a helical segment. Topologically, residues 348-364 (VYRVLAGALFSSLVKQQ) are extracellular. The helical transmembrane segment at 365 to 385 (VTTAVVVTGAVVHYIIIVIMT) threads the bilayer. Residues 386–414 (KVNKYVALKLCKFEESGTFSEQERKFTVK) lie on the Cytoplasmic side of the membrane. The helical transmembrane segment at 415–435 (FFILQFFAHFSSLIYIAFILG) threads the bilayer. The Extracellular segment spans residues 436-543 (RINGHPGKST…EMMIQYGFTT (108 aa)). The helical transmembrane segment at 544-564 (IFVAAFPLAPLLALFSNLVEI) threads the bilayer. At 565-595 (RLDAIKMVRLQRRLVPRKAKDIGTWLQVLET) the chain is on the cytoplasmic side. Residues 596 to 616 (IGVLAVIANGMVIAFTSEFIP) traverse the membrane as a helical segment. At 617–695 (RVVYKYHYGP…FWFILAIRLT (79 aa)) the chain is on the extracellular side. Residues Asn-630, Asn-643, Asn-665, and Asn-681 are each glycosylated (N-linked (GlcNAc...) asparagine). The helical transmembrane segment at 696 to 716 (FVILFEHFALCIKLIAAWFVP) threads the bilayer. Topologically, residues 717–747 (DVPQKVKNEVLQEKYDRIRHRMRFSSRSTDV) are cytoplasmic.

This sequence belongs to the anoctamin family. Post-translationally, phosphorylation on Ser-245 by cAMP-dependent protein kinase A (PKA)is essential for activation of its cation channel activity. In terms of tissue distribution, highly expressed in the olfactory epithelium, particularly in mature olfactory sensory neurons (at protein level). Expressed in the kidney (at protein level). Predominant expression seen in epithelial tissues. Highly expressed in the small intestine, colon and stomach.

Its subcellular location is the cell membrane. It is found in the endoplasmic reticulum. It carries out the reaction a 1,2-diacyl-sn-glycero-3-phospho-L-serine(in) = a 1,2-diacyl-sn-glycero-3-phospho-L-serine(out). The enzyme catalyses a beta-D-galactosyl-(1&lt;-&gt;1')-N-acylsphing-4-enine(out) = a beta-D-galactosyl-(1&lt;-&gt;1')-N-acylsphing-4-enine(in). The catalysed reaction is a 1,2-diacyl-sn-glycero-3-phosphocholine(in) = a 1,2-diacyl-sn-glycero-3-phosphocholine(out). It catalyses the reaction Ca(2+)(in) = Ca(2+)(out). It carries out the reaction Na(+)(in) = Na(+)(out). The enzyme catalyses K(+)(in) = K(+)(out). Cation channel activity is activated via phosphorylation on Ser-245 by cAMP-dependent protein kinase A (PKA). Inhibited by NaCl. Functionally, PKA-activated nonselective cation channel. Discriminates poorly among cations but is more permeable to Ca(2+) ions than to monovalent cations. Acts as a calcium-activated calcium permeable channel which may operate as a endoplasmic reticulum (ER) Ca(2+)-leak channel, reducing the loading of the ER Ca(2+) store. Regulates intracellular Ca2+ signals, ion channel activity, and cytokine release in the renal tissue. Plays an important role in olfaction, amplifying cAMP-evoked cyclic nucleotide-gated (CNG) channel currents in the olfactory sensory neurons. Has calcium-dependent phospholipid scramblase activity; scrambles phosphatidylserine, phosphatidylcholine and galactosylceramide. Does not exhibit calcium-activated chloride channel (CaCC) activity. Can inhibit the activity of ANO1. The sequence is that of Anoctamin-9 from Mus musculus (Mouse).